Reading from the N-terminus, the 87-residue chain is U3-theraphotoxin-Hhn1e (87 aa).

Residues 1–24 (MVNMKASMFLTFAGLVLLFVVCYA) form the signal peptide. Residues 25–52 (SESEEKEFPKGMLSSIFAVDNDFKQEER) constitute a propeptide that is removed on maturation. Intrachain disulfides connect cysteine 54–cysteine 67, cysteine 61–cysteine 72, and cysteine 66–cysteine 79.

It belongs to the neurotoxin 10 (Hwtx-1) family. 51 (Hntx-8) subfamily. Hntx-8 sub-subfamily. Expressed by the venom gland.

Its subcellular location is the secreted. Functionally, ion channel inhibitor. This Cyriopagopus hainanus (Chinese bird spider) protein is U3-theraphotoxin-Hhn1e.